A 385-amino-acid chain; its full sequence is Suppressor protein STP22 of temperature-sensitive alpha-factor receptor and arginine permease (385 aa).

A UEV domain is found at 12-161 (AVVNWLFKVI…LHEPPQDQAP (150 aa)). The tract at residues 155–219 (PPQDQAPSLP…DMDNTDISPT (65 aa)) is disordered. A compositionally biased stretch (polar residues) spans 168-177 (NTQLQQEQNT). The span at 178 to 201 (PPLPPKPKSPHLKPPLPPPPPPQP) shows a compositional bias: pro residues. A coiled-coil region spans residues 272 to 300 (LRAVEQAIEQTMHSLNAQIDVLTANRAKV). The SB domain occupies 322–385 (TDGLNQLYNL…HIQRITSPLS (64 aa)).

It belongs to the ubiquitin-conjugating enzyme family. UEV subfamily. In terms of assembly, component of the ESCRT-I complex (endosomal sorting complex required for transport I) which consists of STP22, VPS28, SRN2 and MVB12 in a 1:1:1:1 stoichiometry. Interacts with HSE1 and VPS27. Interacts with MVB12 and SRN2.

The protein resides in the cytoplasm. It localises to the endosome. The protein localises to the late endosome membrane. Its function is as follows. Component of the ESCRT-I complex, a regulator of vesicular trafficking process. Binds to ubiquitinated cargo proteins and is required for the sorting of endocytic ubiquitinated cargos into multivesicular bodies (MVBs). Mediates the association to the ESCRT-0 complex. Required for vacuolar targeting of temperature-sensitive plasma membrane proteins STE2 and CAN1. The polypeptide is Suppressor protein STP22 of temperature-sensitive alpha-factor receptor and arginine permease (STP22) (Saccharomyces cerevisiae (strain ATCC 204508 / S288c) (Baker's yeast)).